The following is a 70-amino-acid chain: Small ribosomal subunit protein bS21 (70 aa).

The protein belongs to the bacterial ribosomal protein bS21 family.

The chain is Small ribosomal subunit protein bS21 from Campylobacter jejuni subsp. jejuni serotype O:23/36 (strain 81-176).